The following is a 127-amino-acid chain: Fluoride-specific ion channel FluC (127 aa).

4 consecutive transmembrane segments (helical) span residues 1-21 (MPQG…GACL), 39-59 (FGTL…YGVI), 72-92 (LIGV…VETL), and 105-125 (ANVF…IELM). Gly-79 and Thr-82 together coordinate Na(+).

This sequence belongs to the fluoride channel Fluc/FEX (TC 1.A.43) family.

It localises to the cell inner membrane. It carries out the reaction fluoride(in) = fluoride(out). With respect to regulation, na(+) is not transported, but it plays an essential structural role and its presence is essential for fluoride channel function. Fluoride-specific ion channel. Important for reducing fluoride concentration in the cell, thus reducing its toxicity. This is Fluoride-specific ion channel FluC from Alteromonas mediterranea (strain DSM 17117 / CIP 110805 / LMG 28347 / Deep ecotype).